The following is a 241-amino-acid chain: Ribonuclease PH (241 aa).

Phosphate is bound by residues R89 and G127–R129.

Belongs to the RNase PH family. As to quaternary structure, homohexameric ring arranged as a trimer of dimers.

The enzyme catalyses tRNA(n+1) + phosphate = tRNA(n) + a ribonucleoside 5'-diphosphate. Its function is as follows. Phosphorolytic 3'-5' exoribonuclease that plays an important role in tRNA 3'-end maturation. Removes nucleotide residues following the 3'-CCA terminus of tRNAs; can also add nucleotides to the ends of RNA molecules by using nucleoside diphosphates as substrates, but this may not be physiologically important. Probably plays a role in initiation of 16S rRNA degradation (leading to ribosome degradation) during starvation. The polypeptide is Ribonuclease PH (Xanthomonas campestris pv. campestris (strain 8004)).